Reading from the N-terminus, the 369-residue chain is Flagellar P-ring protein 2 (369 aa).

The N-terminal stretch at 1–24 is a signal peptide; sequence MCAFAAILSLLSVLLMATSRSSDA.

This sequence belongs to the FlgI family. The basal body constitutes a major portion of the flagellar organelle and consists of four rings (L,P,S, and M) mounted on a central rod.

The protein localises to the periplasm. The protein resides in the bacterial flagellum basal body. Functionally, assembles around the rod to form the L-ring and probably protects the motor/basal body from shearing forces during rotation. In Burkholderia thailandensis (strain ATCC 700388 / DSM 13276 / CCUG 48851 / CIP 106301 / E264), this protein is Flagellar P-ring protein 2.